The following is a 386-amino-acid chain: 8-amino-7-oxononanoate synthase (386 aa).

Residue R19 coordinates substrate. G106–Y107 provides a ligand contact to pyridoxal 5'-phosphate. H131 is a substrate binding site. The pyridoxal 5'-phosphate site is built by S177, H205, and T233. K236 bears the N6-(pyridoxal phosphate)lysine mark. T350 contacts substrate.

Belongs to the class-II pyridoxal-phosphate-dependent aminotransferase family. BioF subfamily. In terms of assembly, homodimer. It depends on pyridoxal 5'-phosphate as a cofactor.

It carries out the reaction 6-carboxyhexanoyl-[ACP] + L-alanine + H(+) = (8S)-8-amino-7-oxononanoate + holo-[ACP] + CO2. The protein operates within cofactor biosynthesis; biotin biosynthesis. Its function is as follows. Catalyzes the decarboxylative condensation of pimeloyl-[acyl-carrier protein] and L-alanine to produce 8-amino-7-oxononanoate (AON), [acyl-carrier protein], and carbon dioxide. This chain is 8-amino-7-oxononanoate synthase, found in Alcanivorax borkumensis (strain ATCC 700651 / DSM 11573 / NCIMB 13689 / SK2).